Reading from the N-terminus, the 595-residue chain is Probable translation initiation factor IF-2 (595 aa).

Residues 11–225 (LRTPIVAVLG…ILVGLAQRYL (215 aa)) form the tr-type G domain. A G1 region spans residues 20 to 27 (GHVDHGKT). Residue 20 to 27 (GHVDHGKT) participates in GTP binding. Residues 45 to 49 (GITQH) are G2. The tract at residues 81 to 84 (DTPG) is G3. GTP-binding positions include 81-85 (DTPGH) and 135-138 (NKID). Residues 135 to 138 (NKID) form a G4 region. Residues 203 to 205 (SAL) are G5.

The protein belongs to the TRAFAC class translation factor GTPase superfamily. Classic translation factor GTPase family. IF-2 subfamily.

In terms of biological role, function in general translation initiation by promoting the binding of the formylmethionine-tRNA to ribosomes. Seems to function along with eIF-2. This is Probable translation initiation factor IF-2 (infB) from Archaeoglobus fulgidus (strain ATCC 49558 / DSM 4304 / JCM 9628 / NBRC 100126 / VC-16).